A 547-amino-acid chain; its full sequence is Sterol carrier protein 2 (547 aa).

S3 carries the phosphoserine modification. An N6-acetyllysine; alternate modification is found at K132. At K132 the chain carries N6-succinyllysine; alternate. K168 carries the N6-succinyllysine modification. Residues K173 and K177 each carry the N6-acetyllysine modification. K183 carries the N6-acetyllysine; alternate modification. K183 carries the N6-succinyllysine; alternate modification. K282 is modified (N6-succinyllysine). 5 positions are modified to N6-acetyllysine; alternate: K341, K432, K438, K443, and K453. N6-succinyllysine; alternate occurs at positions 341, 432, 438, 443, and 453. The region spanning A433–G543 is the SCP2 domain. K464 is modified (N6-succinyllysine). Residue K470 is modified to N6-acetyllysine; alternate. At K470 the chain carries N6-succinyllysine; alternate. Position 479 is an N6-succinyllysine (K479). K491 bears the N6-acetyllysine mark. Residues K492 and K511 each carry the N6-succinyllysine modification. Residue S516 is modified to Phosphoserine. K522 and K534 each carry N6-succinyllysine. Residues A545–L547 carry the Microbody targeting signal motif.

In the N-terminal section; belongs to the thiolase-like superfamily. Thiolase family. As to quaternary structure, interacts with PEX5; the interaction is essential for peroxisomal import. In terms of processing, preSCP2, a protein with a molecular mass of about 15 kDa, is processed into its mature form (SCP2) by proteolytic cleavage of a 20 residue leader sequence after translocation into peroxisomes. In terms of tissue distribution, liver, fibroblasts, and placenta.

It localises to the peroxisome. Its subcellular location is the cytoplasm. It is found in the mitochondrion. The protein resides in the endoplasmic reticulum. The enzyme catalyses choloyl-CoA + propanoyl-CoA = 3alpha,7alpha,12alpha-trihydroxy-24-oxo-5beta-cholestan-26-oyl-CoA + CoA. The catalysed reaction is 4,8,12-trimethyltridecanoyl-CoA + propanoyl-CoA = 3-oxopristanoyl-CoA + CoA. It carries out the reaction an acyl-CoA + acetyl-CoA = a 3-oxoacyl-CoA + CoA. It catalyses the reaction hexanoyl-CoA + acetyl-CoA = 3-oxooctanoyl-CoA + CoA. The enzyme catalyses tetradecanoyl-CoA + acetyl-CoA = 3-oxohexadecanoyl-CoA + CoA. The catalysed reaction is 3-oxohexadecanedioyl-CoA + CoA = tetradecanedioyl-CoA + acetyl-CoA. It carries out the reaction propanoyl-CoA + tetradecanoyl-CoA = 3-oxo-2-methylhexadecanoyl-CoA + CoA. It catalyses the reaction butanoyl-CoA + acetyl-CoA = 3-oxohexanoyl-CoA + CoA. The enzyme catalyses octanoyl-CoA + acetyl-CoA = 3-oxodecanoyl-CoA + CoA. The catalysed reaction is decanoyl-CoA + acetyl-CoA = 3-oxododecanoyl-CoA + CoA. It carries out the reaction dodecanoyl-CoA + acetyl-CoA = 3-oxotetradecanoyl-CoA + CoA. It catalyses the reaction hexadecanoyl-CoA + acetyl-CoA = 3-oxooctadecanoyl-CoA + CoA. The enzyme catalyses 3-oxo-(9Z-octadecenoyl)-CoA + CoA = (7Z)-hexadecenoyl-CoA + acetyl-CoA. The catalysed reaction is 7-dehydrocholesterol(in) = 7-dehydrocholesterol(out). Plays a crucial role in the peroxisomal oxidation of branched-chain fatty acids. Catalyzes the last step of the peroxisomal beta-oxidation of branched chain fatty acids and the side chain of the bile acid intermediates di- and trihydroxycoprostanic acids (DHCA and THCA). Also active with medium and long straight chain 3-oxoacyl-CoAs. Stimulates the microsomal conversion of 7-dehydrocholesterol to cholesterol and transfers phosphatidylcholine and 7-dehydrocholesterol between membrances, in vitro. Isoforms SCP2 and SCPx cooperate in peroxisomal oxidation of certain naturally occurring tetramethyl-branched fatty acyl-CoAs. In terms of biological role, mediates the transfer of all common phospholipids, cholesterol and gangliosides from the endoplasmic reticulum to the plasma membrane. May play a role in regulating steroidogenesis. Stimulates the microsomal conversion of 7-dehydrocholesterol to cholesterol. Also binds fatty acids and fatty acyl Coenzyme A (CoA) such as phytanoyl-CoA. Involved in the regulation phospholipid synthesis in endoplasmic reticulum enhancing the incorporation of exogenous fatty acid into glycerides. Seems to stimulate the rate-limiting step in phosphatidic acid formation mediated by GPAT3. Isoforms SCP2 and SCPx cooperate in peroxisomal oxidation of certain naturally occurring tetramethyl-branched fatty acyl-CoAs. The sequence is that of Sterol carrier protein 2 from Homo sapiens (Human).